Consider the following 541-residue polypeptide: Light-independent protochlorophyllide reductase subunit B (541 aa).

Aspartate 36 is a binding site for [4Fe-4S] cluster. The active-site Proton donor is aspartate 290. 425–426 (GL) is a substrate binding site.

This sequence belongs to the ChlB/BchB/BchZ family. As to quaternary structure, protochlorophyllide reductase is composed of three subunits; ChlL, ChlN and ChlB. Forms a heterotetramer of two ChlB and two ChlN subunits. It depends on [4Fe-4S] cluster as a cofactor.

It carries out the reaction chlorophyllide a + oxidized 2[4Fe-4S]-[ferredoxin] + 2 ADP + 2 phosphate = protochlorophyllide a + reduced 2[4Fe-4S]-[ferredoxin] + 2 ATP + 2 H2O. The protein operates within porphyrin-containing compound metabolism; chlorophyll biosynthesis (light-independent). Its function is as follows. Component of the dark-operative protochlorophyllide reductase (DPOR) that uses Mg-ATP and reduced ferredoxin to reduce ring D of protochlorophyllide (Pchlide) to form chlorophyllide a (Chlide). This reaction is light-independent. The NB-protein (ChlN-ChlB) is the catalytic component of the complex. This chain is Light-independent protochlorophyllide reductase subunit B, found in Synechococcus sp. (strain CC9902).